The chain runs to 255 residues: Triosephosphate isomerase (255 aa).

N9–K11 lines the substrate pocket. H96 functions as the Electrophile in the catalytic mechanism. E168 serves as the catalytic Proton acceptor. Residues G174 and S213 each contribute to the substrate site.

The protein belongs to the triosephosphate isomerase family. As to quaternary structure, homodimer.

It localises to the cytoplasm. It catalyses the reaction D-glyceraldehyde 3-phosphate = dihydroxyacetone phosphate. It functions in the pathway carbohydrate biosynthesis; gluconeogenesis. Its pathway is carbohydrate degradation; glycolysis; D-glyceraldehyde 3-phosphate from glycerone phosphate: step 1/1. Functionally, involved in the gluconeogenesis. Catalyzes stereospecifically the conversion of dihydroxyacetone phosphate (DHAP) to D-glyceraldehyde-3-phosphate (G3P). The sequence is that of Triosephosphate isomerase from Buchnera aphidicola subsp. Acyrthosiphon pisum (strain APS) (Acyrthosiphon pisum symbiotic bacterium).